The primary structure comprises 513 residues: Histidine ammonia-lyase (513 aa).

A cross-link (5-imidazolinone (Ala-Gly)) is located at residues 146–148 (ASG). Serine 147 bears the 2,3-didehydroalanine (Ser) mark.

Belongs to the PAL/histidase family. Post-translationally, contains an active site 4-methylidene-imidazol-5-one (MIO), which is formed autocatalytically by cyclization and dehydration of residues Ala-Ser-Gly.

It is found in the cytoplasm. It catalyses the reaction L-histidine = trans-urocanate + NH4(+). It functions in the pathway amino-acid degradation; L-histidine degradation into L-glutamate; N-formimidoyl-L-glutamate from L-histidine: step 1/3. This Shewanella oneidensis (strain ATCC 700550 / JCM 31522 / CIP 106686 / LMG 19005 / NCIMB 14063 / MR-1) protein is Histidine ammonia-lyase.